The primary structure comprises 424 residues: Glutamate-1-semialdehyde 2,1-aminomutase (424 aa).

K263 bears the N6-(pyridoxal phosphate)lysine mark.

The protein belongs to the class-III pyridoxal-phosphate-dependent aminotransferase family. HemL subfamily. Homodimer. Pyridoxal 5'-phosphate is required as a cofactor.

It is found in the cytoplasm. It catalyses the reaction (S)-4-amino-5-oxopentanoate = 5-aminolevulinate. The protein operates within porphyrin-containing compound metabolism; protoporphyrin-IX biosynthesis; 5-aminolevulinate from L-glutamyl-tRNA(Glu): step 2/2. This chain is Glutamate-1-semialdehyde 2,1-aminomutase, found in Campylobacter jejuni subsp. jejuni serotype O:23/36 (strain 81-176).